Consider the following 272-residue polypeptide: MDKDFMKINVTPWESVEIARHKDRPSGQYYIETIFKDFIEFHGDRNFGDDQAIIGGIASINDINVTVIAITKGSNTSEYIKRNFGMPNPEGYRKALRLMKQAEKFKRPIICFIDTMGAFPGMGAEERGQGQAIANNLFELSRLKTPIISIITGEGESGGALALAVADKIFMLEHSIYSVLSPEGFASILWKDPSRVKEAAAVAKITAKDLKGFDIIDGIVKEPRGGAHKNPVKTAEVLKKTIVDSLLELKEKDLNELIDNRYNKFRDMGNFY.

In terms of domain architecture, CoA carboxyltransferase C-terminal spans 1 to 248; sequence MDKDFMKINV…KKTIVDSLLE (248 aa).

It belongs to the AccA family. As to quaternary structure, acetyl-CoA carboxylase is a heterohexamer composed of biotin carboxyl carrier protein (AccB), biotin carboxylase (AccC) and two subunits each of ACCase subunit alpha (AccA) and ACCase subunit beta (AccD).

The protein localises to the cytoplasm. It catalyses the reaction N(6)-carboxybiotinyl-L-lysyl-[protein] + acetyl-CoA = N(6)-biotinyl-L-lysyl-[protein] + malonyl-CoA. It functions in the pathway lipid metabolism; malonyl-CoA biosynthesis; malonyl-CoA from acetyl-CoA: step 1/1. Functionally, component of the acetyl coenzyme A carboxylase (ACC) complex. First, biotin carboxylase catalyzes the carboxylation of biotin on its carrier protein (BCCP) and then the CO(2) group is transferred by the carboxyltransferase to acetyl-CoA to form malonyl-CoA. This chain is Acetyl-coenzyme A carboxylase carboxyl transferase subunit alpha, found in Clostridium beijerinckii (strain ATCC 51743 / NCIMB 8052) (Clostridium acetobutylicum).